The primary structure comprises 241 residues: Large ribosomal subunit protein uL3 (241 aa).

Disordered stretches follow at residues 140 to 162 (SHRSIGSTGGRQDPGKTFKNKKM) and 217 to 241 (PLPGKFRENGASAPATEAPAAEETA). The residue at position 151 (Gln151) is an N5-methylglutamine. Residues 229-241 (APATEAPAAEETA) are compositionally biased toward low complexity.

It belongs to the universal ribosomal protein uL3 family. Part of the 50S ribosomal subunit. Forms a cluster with proteins L14 and L19. In terms of processing, methylated by PrmB.

Its function is as follows. One of the primary rRNA binding proteins, it binds directly near the 3'-end of the 23S rRNA, where it nucleates assembly of the 50S subunit. This Methylobacterium radiotolerans (strain ATCC 27329 / DSM 1819 / JCM 2831 / NBRC 15690 / NCIMB 10815 / 0-1) protein is Large ribosomal subunit protein uL3.